Reading from the N-terminus, the 1429-residue chain is Nitric oxide synthase 1 (1429 aa).

The segment at 1 to 200 (MEEHTFGVQQ…LQDSGEQDEL (200 aa)) is interaction with NOSIP. The PDZ domain occupies 17–99 (SVRLFKRKVG…ETHVVLILRG (83 aa)). Disordered stretches follow at residues 114-174 (DGTP…SVSQ) and 271-298 (NNPY…SRCP). An interaction with DYNLL1/PIN region spans residues 163 to 240 (QGRGQGAGSV…TGIQVDRDLD (78 aa)). Positions 272–294 (NPYSENEQSPASGKQSPTKNGSP) are enriched in polar residues. At serine 280 the chain carries Phosphoserine. Serine 334 lines the (6R)-L-erythro-5,6,7,8-tetrahydrobiopterin pocket. Residue cysteine 415 participates in heme b binding. The L-arginine site is built by glutamine 478, tryptophan 587, tyrosine 588, and glutamate 592. 3 residues coordinate (6R)-L-erythro-5,6,7,8-tetrahydrobiopterin: valine 677, tryptophan 678, and phenylalanine 691. Tyrosine 706 contacts heme b. The interval 725–745 (KRRAIGFKKLAEAVKFSAKLM) is calmodulin-binding. The region spanning 755-935 (ATILYATETG…AFRTWAKKVF (181 aa)) is the Flavodoxin-like domain. FMN-binding residues include threonine 761, glutamate 762, threonine 763, lysine 765, serine 766, serine 807, threonine 808, and glycine 812. Residues serine 847, serine 857, and serine 858 each carry the phosphoserine modification. Positions 886, 891, 893, 919, and 923 each coordinate FMN. Residues 990–1237 (KRVSAARLLS…VRGAPSFHLP (248 aa)) form the FAD-binding FR-type domain. Arginine 1010 lines the NADP(+) pocket. The FAD site is built by histidine 1032, arginine 1173, tyrosine 1174, tyrosine 1175, serine 1176, threonine 1191, and alanine 1193. Residue serine 1196 participates in NADP(+) binding. 4 residues coordinate FAD: tyrosine 1197, valine 1210, cysteine 1211, and serine 1212. NADP(+)-binding residues include threonine 1251, arginine 1284, serine 1313, arginine 1314, lysine 1320, tyrosine 1322, glutamine 1324, aspartate 1357, threonine 1398, and arginine 1400.

This sequence belongs to the NOS family. In terms of assembly, homodimer. Interacts with DLG4; the interaction possibly being prevented by the association between NOS1 and CAPON. Forms a ternary complex with CAPON and RASD1. Forms a ternary complex with CAPON and SYN1. Interacts with ZDHHC23. Interacts with NOSIP; which may impair its synaptic location. Interacts with HTR4. Interacts with VAC14. Interacts (via N-terminal domain) with DLG4 (via N-terminal tandem pair of PDZ domains). Interacts with SLC6A4. Forms a complex with ASL, ASS1 and SLC7A1; the complex regulates cell-autonomous L-arginine synthesis and citrulline recycling while channeling extracellular L-arginine to nitric oxide synthesis pathway. Interacts with DMD; localizes NOS1 to sarcolemma in muscle cells. Interacts with DYNLL1; inhibits the nitric oxide synthase activity. Requires heme b as cofactor. FAD is required as a cofactor. The cofactor is FMN. (6R)-L-erythro-5,6,7,8-tetrahydrobiopterin serves as cofactor. In terms of processing, ubiquitinated; mediated by STUB1/CHIP in the presence of Hsp70 and Hsp40 (in vitro). Widely expressed in the nervous system: expressed in cerebrum, olfactory bulb, hippocampus, midbrain, cerebellum, pons, medulla oblongata, and spinal cord. Also found in skeletal muscle, where it is localized beneath the sarcolemma of fast twitch muscle fibers, and in spleen, heart, kidney, and liver. N-NOS-1 and N-NOS-2 are found in all parts of the nervous system. NNOS beta and gamma occur in a region-specific manner in the brain and NNOS beta expression is developmentally regulated. NNOS Mu is only found in mature skeletal and cardiac muscles.

Its subcellular location is the cell membrane. It localises to the sarcolemma. The protein resides in the cell projection. The protein localises to the dendritic spine. The enzyme catalyses 2 L-arginine + 3 NADPH + 4 O2 + H(+) = 2 L-citrulline + 2 nitric oxide + 3 NADP(+) + 4 H2O. Its activity is regulated as follows. Stimulated by calcium/calmodulin. Inhibited by DYNLL1 that prevents the dimerization of the protein. Inhibited by NOSIP. In terms of biological role, produces nitric oxide (NO) which is a messenger molecule with diverse functions throughout the body. In the brain and peripheral nervous system, NO displays many properties of a neurotransmitter. Probably has nitrosylase activity and mediates cysteine S-nitrosylation of cytoplasmic target proteins such SRR. Isoform NNOS Mu may be an effector enzyme for the dystrophin complex. In Mus musculus (Mouse), this protein is Nitric oxide synthase 1.